Reading from the N-terminus, the 536-residue chain is MAEKRTGLAEDGAKSVYERLKNDRAPYETRAQNCAQYTIPSLFPKDSDNASTDYQTPWQAVGARGLNNLASKLMLALFPMQTWMRLTISEYEAKQLLSDPDGLAKVDEGLSMVERIIMNYIESNSYRVTLFEALKQLVVAGNVLLYLPEPEGSNYNPMKLYRLSSYVVQRDAFGNVLQMVTRDQIAFGALPEDIRKAVEGQGGEKKADETIDVYTHIYLDEDSGEYLRYEEVEGMEVQGSDGTYPKEACPYIPIRMVRLDGESYGRSYIEEYLGDLRSLENLQEAIVKMSMISSKVIGLVNPAGITQPRRLTKAQTGDFVTGRPEDISFLQLEKQADFTVAKAVSDAIEARLSFAFMLNSAVQRTGERVTAEEIRYVASELEDTLGGVYSILSQELQLPLVRVLLKQLQATQQIPELPKEAVEPTISTGLEAIGRGQDLDKLERCVTAWAALAPMRDDPDINLAMIKLRIANAIGIDTSGILLTEEQKQQKMAQQSMQMGMDNGAAALAQGMAAQATASPEAMAAAADSVGLQPGI.

The protein belongs to the podoviridae portal protein family. In terms of assembly, homododecamer. Interacts with major capsid protein. Interacts with the tail tube protein gp11. Interacts with the terminase large subunit. Interacts with the internal virion protein gp14.

The protein resides in the virion. Functionally, forms the portal vertex of the capsid. This portal plays critical roles in head assembly, genome packaging, neck/tail attachment, and genome ejection. The portal protein multimerizes as a single ring-shaped homododecamer arranged around a central channel. The protein is Portal protein of Escherichia phage T7 (Bacteriophage T7).